The following is a 567-amino-acid chain: Urease subunit alpha (567 aa).

One can recognise a Urease domain in the interval G129–F567. H134, H136, and K217 together coordinate Ni(2+). K217 bears the N6-carboxylysine mark. H219 is a binding site for substrate. Ni(2+) is bound by residues H246 and H272. H320 serves as the catalytic Proton donor. Residue D360 participates in Ni(2+) binding.

Belongs to the metallo-dependent hydrolases superfamily. Urease alpha subunit family. Heterotrimer of UreA (gamma), UreB (beta) and UreC (alpha) subunits. Three heterotrimers associate to form the active enzyme. Requires Ni cation as cofactor. Post-translationally, carboxylation allows a single lysine to coordinate two nickel ions.

The protein localises to the cytoplasm. The enzyme catalyses urea + 2 H2O + H(+) = hydrogencarbonate + 2 NH4(+). Its pathway is nitrogen metabolism; urea degradation; CO(2) and NH(3) from urea (urease route): step 1/1. This chain is Urease subunit alpha, found in Escherichia coli O157:H7.